The chain runs to 785 residues: Endonuclease MutS2 (785 aa).

Residue 335 to 342 coordinates ATP; that stretch reads GPNTGGKT. The 76-residue stretch at 710–785 folds into the Smr domain; the sequence is LDLRGERYED…GNGVTIVEFK (76 aa).

It belongs to the DNA mismatch repair MutS family. MutS2 subfamily. In terms of assembly, homodimer. Binds to stalled ribosomes, contacting rRNA.

Its function is as follows. Endonuclease that is involved in the suppression of homologous recombination and thus may have a key role in the control of bacterial genetic diversity. In terms of biological role, acts as a ribosome collision sensor, splitting the ribosome into its 2 subunits. Detects stalled/collided 70S ribosomes which it binds and splits by an ATP-hydrolysis driven conformational change. Acts upstream of the ribosome quality control system (RQC), a ribosome-associated complex that mediates the extraction of incompletely synthesized nascent chains from stalled ribosomes and their subsequent degradation. Probably generates substrates for RQC. The chain is Endonuclease MutS2 from Listeria monocytogenes serotype 4b (strain F2365).